The chain runs to 486 residues: Ribulose bisphosphate carboxylase large chain (486 aa).

Residues N126 and T176 each coordinate substrate. The Proton acceptor role is filled by K178. K180 provides a ligand contact to substrate. Mg(2+)-binding residues include K204, D206, and E207. N6-carboxylysine is present on K204. The Proton acceptor role is filled by H296. Substrate is bound by residues R297, H329, and S381.

This sequence belongs to the RuBisCO large chain family. Type I subfamily. As to quaternary structure, heterohexadecamer of 8 large chains and 8 small chains. It depends on Mg(2+) as a cofactor.

The catalysed reaction is 2 (2R)-3-phosphoglycerate + 2 H(+) = D-ribulose 1,5-bisphosphate + CO2 + H2O. The enzyme catalyses D-ribulose 1,5-bisphosphate + O2 = 2-phosphoglycolate + (2R)-3-phosphoglycerate + 2 H(+). RuBisCO catalyzes two reactions: the carboxylation of D-ribulose 1,5-bisphosphate, the primary event in carbon dioxide fixation, as well as the oxidative fragmentation of the pentose substrate. Both reactions occur simultaneously and in competition at the same active site. This Methylacidiphilum infernorum (isolate V4) (Methylokorus infernorum (strain V4)) protein is Ribulose bisphosphate carboxylase large chain.